The primary structure comprises 310 residues: MPIKTQNDLPVKEILERENIFVMDENRASHQNIRQLEIAIVNLMPLKEDTELQILRSLSNTPIQVNVTFVTTSTHEATHTSLSHLNKFYETFDDIKDRYFDGMIITGAPVELMEYEEVDYWDEICSIMEWSKTHAFSTLHLCWGAQAGLYYHYGIPKRVLPKKKFGVYAHRVKNRKIPLVRGFDDVFYAPHSRHTEVLKEDILKHPELTILAESDDAGVFLLMDQDGKKIFVMGHPEYDRYTLHNEYERDKKKGLDIDMPVNYYPDNDDTQKPLLQWRSHGNILYSNWLNYYVYQEVPYEFINNREIIGK.

C142 functions as the Acyl-thioester intermediate in the catalytic mechanism. 2 residues coordinate substrate: K163 and S192. The active-site Proton acceptor is the H235. The active site involves E237. Residue R249 participates in substrate binding.

Belongs to the MetA family.

Its subcellular location is the cytoplasm. It catalyses the reaction L-homoserine + acetyl-CoA = O-acetyl-L-homoserine + CoA. The protein operates within amino-acid biosynthesis; L-methionine biosynthesis via de novo pathway; O-acetyl-L-homoserine from L-homoserine: step 1/1. In terms of biological role, transfers an acetyl group from acetyl-CoA to L-homoserine, forming acetyl-L-homoserine. The protein is Homoserine O-acetyltransferase of Agathobacter rectalis (strain ATCC 33656 / DSM 3377 / JCM 17463 / KCTC 5835 / VPI 0990) (Eubacterium rectale).